We begin with the raw amino-acid sequence, 197 residues long: Transcription factor FapR (197 aa).

The protein belongs to the FapR family.

In terms of biological role, transcriptional factor involved in regulation of membrane lipid biosynthesis by repressing genes involved in fatty acid and phospholipid metabolism. In Bacillus mycoides (strain KBAB4) (Bacillus weihenstephanensis), this protein is Transcription factor FapR.